The chain runs to 63 residues: Large ribosomal subunit protein bL28 (63 aa).

Residues Gly-11–His-20 are compositionally biased toward polar residues. The tract at residues Gly-11–Lys-30 is disordered. Over residues Ser-21–Lys-30 the composition is skewed to basic residues.

Belongs to the bacterial ribosomal protein bL28 family.

The sequence is that of Large ribosomal subunit protein bL28 from Natranaerobius thermophilus (strain ATCC BAA-1301 / DSM 18059 / JW/NM-WN-LF).